A 416-amino-acid chain; its full sequence is Serine hydroxymethyltransferase 1 (416 aa).

Residues leucine 121 and 125-127 contribute to the (6S)-5,6,7,8-tetrahydrofolate site; that span reads GHL. Lysine 229 is subject to N6-(pyridoxal phosphate)lysine. (6S)-5,6,7,8-tetrahydrofolate is bound by residues glutamate 245 and 354-356; that span reads SPF.

Belongs to the SHMT family. As to quaternary structure, homodimer. Requires pyridoxal 5'-phosphate as cofactor.

It localises to the cytoplasm. The enzyme catalyses (6R)-5,10-methylene-5,6,7,8-tetrahydrofolate + glycine + H2O = (6S)-5,6,7,8-tetrahydrofolate + L-serine. It functions in the pathway one-carbon metabolism; tetrahydrofolate interconversion. The protein operates within amino-acid biosynthesis; glycine biosynthesis; glycine from L-serine: step 1/1. Catalyzes the reversible interconversion of serine and glycine with tetrahydrofolate (THF) serving as the one-carbon carrier. This reaction serves as the major source of one-carbon groups required for the biosynthesis of purines, thymidylate, methionine, and other important biomolecules. Also exhibits THF-independent aldolase activity toward beta-hydroxyamino acids, producing glycine and aldehydes, via a retro-aldol mechanism. This is Serine hydroxymethyltransferase 1 from Vibrio parahaemolyticus serotype O3:K6 (strain RIMD 2210633).